The primary structure comprises 542 residues: Chaperonin GroEL (542 aa).

Residues 29–32, lysine 50, 86–90, glycine 415, and aspartate 495 contribute to the ATP site; these read TLGP and DGTTT.

This sequence belongs to the chaperonin (HSP60) family. Forms a cylinder of 14 subunits composed of two heptameric rings stacked back-to-back. Interacts with the co-chaperonin GroES.

The protein localises to the cytoplasm. The enzyme catalyses ATP + H2O + a folded polypeptide = ADP + phosphate + an unfolded polypeptide.. Together with its co-chaperonin GroES, plays an essential role in assisting protein folding. The GroEL-GroES system forms a nano-cage that allows encapsulation of the non-native substrate proteins and provides a physical environment optimized to promote and accelerate protein folding. The protein is Chaperonin GroEL of Flavobacterium psychrophilum (strain ATCC 49511 / DSM 21280 / CIP 103535 / JIP02/86).